The sequence spans 883 residues: Alanine--tRNA ligase (883 aa).

Residues His-560, His-564, Cys-665, and His-669 each contribute to the Zn(2+) site.

The protein belongs to the class-II aminoacyl-tRNA synthetase family. The cofactor is Zn(2+).

The protein localises to the cytoplasm. It catalyses the reaction tRNA(Ala) + L-alanine + ATP = L-alanyl-tRNA(Ala) + AMP + diphosphate. Catalyzes the attachment of alanine to tRNA(Ala) in a two-step reaction: alanine is first activated by ATP to form Ala-AMP and then transferred to the acceptor end of tRNA(Ala). Also edits incorrectly charged Ser-tRNA(Ala) and Gly-tRNA(Ala) via its editing domain. This Mesomycoplasma hyopneumoniae (strain J / ATCC 25934 / NCTC 10110) (Mycoplasma hyopneumoniae) protein is Alanine--tRNA ligase.